The chain runs to 382 residues: Protein RecA (382 aa).

79–86 is an ATP binding site; it reads GPESSGKT.

The protein belongs to the RecA family.

The protein localises to the cytoplasm. In terms of biological role, can catalyze the hydrolysis of ATP in the presence of single-stranded DNA, the ATP-dependent uptake of single-stranded DNA by duplex DNA, and the ATP-dependent hybridization of homologous single-stranded DNAs. It interacts with LexA causing its activation and leading to its autocatalytic cleavage. This is Protein RecA from Streptococcus sanguinis (strain SK36).